The primary structure comprises 429 residues: Adenylosuccinate synthetase (429 aa).

Residues 12–18 (GDEGKGK) and 40–42 (GHT) contribute to the GTP site. The active-site Proton acceptor is Asp13. The Mg(2+) site is built by Asp13 and Gly40. IMP contacts are provided by residues 13–16 (DEGK), 38–41 (NAGH), Thr129, Arg143, Gln223, Thr238, and Arg302. His41 acts as the Proton donor in catalysis. 298–304 (VVTGRKR) provides a ligand contact to substrate. Residues Arg304, 330 to 332 (KLD), and 412 to 414 (STS) contribute to the GTP site.

Belongs to the adenylosuccinate synthetase family. As to quaternary structure, homodimer. Requires Mg(2+) as cofactor.

The protein localises to the cytoplasm. It catalyses the reaction IMP + L-aspartate + GTP = N(6)-(1,2-dicarboxyethyl)-AMP + GDP + phosphate + 2 H(+). The protein operates within purine metabolism; AMP biosynthesis via de novo pathway; AMP from IMP: step 1/2. Functionally, plays an important role in the de novo pathway of purine nucleotide biosynthesis. Catalyzes the first committed step in the biosynthesis of AMP from IMP. This Brucella anthropi (strain ATCC 49188 / DSM 6882 / CCUG 24695 / JCM 21032 / LMG 3331 / NBRC 15819 / NCTC 12168 / Alc 37) (Ochrobactrum anthropi) protein is Adenylosuccinate synthetase.